The sequence spans 183 residues: Capsid protein (183 aa).

Positions 136–183 (NAPILSTLPETTVVRRRGRSPRRRTPSPRRRRSQSPRRRRSQSRESQC) are disordered. Over residues 149 to 176 (VRRRGRSPRRRTPSPRRRRSQSPRRRRS) the composition is skewed to basic residues. A phosphoserine; by host mark is found at S155, S162, and S170. The stretch at 155–161 (SPRRRTP) is one 1; half-length repeat. Residues 155-177 (SPRRRTPSPRRRRSQSPRRRRSQ) form a 3 X 8 AA repeats of S-P-R-R-R-[PR]-S-Q region. A Bipartite nuclear localization signal motif is present at residues 158–175 (RRTPSPRRRRSQSPRRRR). Repeat copies occupy residues 162 to 169 (SPRRRRSQ) and 170 to 177 (SPRRRRSQ). Positions 177–183 (QSRESQC) are RNA binding.

The protein belongs to the orthohepadnavirus core antigen family. In terms of assembly, homodimerizes, then multimerizes. Interacts with cytosol exposed regions of viral L glycoprotein present in the reticulum-to-Golgi compartment. Interacts with human FLNB. Phosphorylated form interacts with host importin alpha; this interaction depends on the exposure of the NLS, which itself depends upon genome maturation and/or phosphorylation of the capsid protein. Interacts with host NUP153. Post-translationally, phosphorylated by host SRPK1, SRPK2, and maybe protein kinase C or GAPDH. Phosphorylation is critical for pregenomic RNA packaging. Protein kinase C phosphorylation is stimulated by HBx protein and may play a role in transport of the viral genome to the nucleus at the late step during the viral replication cycle.

It localises to the virion. The protein resides in the host cytoplasm. In terms of biological role, self assembles to form an icosahedral capsid. Most capsids appear to be large particles with an icosahedral symmetry of T=4 and consist of 240 copies of capsid protein, though a fraction forms smaller T=3 particles consisting of 180 capsid proteins. Entering capsids are transported along microtubules to the nucleus. Phosphorylation of the capsid is thought to induce exposure of nuclear localization signal in the C-terminal portion of the capsid protein that allows binding to the nuclear pore complex via the importin (karyopherin-) alpha and beta. Capsids are imported in intact form through the nuclear pore into the nuclear basket, where it probably binds NUP153. Only capsids that contain the mature viral genome can release the viral DNA and capsid protein into the nucleoplasm. Immature capsids get stuck in the basket. Capsids encapsulate the pre-genomic RNA and the P protein. Pre-genomic RNA is reverse-transcribed into DNA while the capsid is still in the cytoplasm. The capsid can then either be directed to the nucleus, providing more genomes for transcription, or bud through the endoplasmic reticulum to provide new virions. This is Capsid protein from Homo sapiens (Human).